Consider the following 969-residue polypeptide: Translation initiation factor IF-2 (969 aa).

The tract at residues 50–370 (SFASKSAPAN…QAPSVGGVRL (321 aa)) is disordered. A compositionally biased stretch (low complexity) spans 54–76 (KSAPANGAKPGPAASARPGAKPT). Positions 77–87 (PGGPRPGPRTP) are enriched in pro residues. Low complexity predominate over residues 88–102 (APAASAPQAPAEQTA). A compositionally biased stretch (pro residues) spans 112 to 124 (AVKPGPAPTPARP). A compositionally biased stretch (low complexity) spans 125–164 (AAPEAPAAKAAPEAPAQRPTPGGPRPGQQQQRPGAPAQGG). Pro residues predominate over residues 240 to 267 (PGGPRPSPGSMPPRPNPGAMPQRTPRPG). A compositionally biased stretch (gly residues) spans 269-340 (SAGGRPGRPG…GAAGAFGRPG (72 aa)). The span at 344-353 (RRGRKSKRQK) shows a compositional bias: basic residues. The tr-type G domain occupies 465-636 (VRPPVVTVMG…AVLLTADAAL (172 aa)). Positions 474-481 (GHVDHGKT) are G1. 474–481 (GHVDHGKT) is a binding site for GTP. The tract at residues 499–503 (GITQH) is G2. The segment at 524–527 (DTPG) is G3. GTP is bound by residues 524–528 (DTPGH) and 578–581 (NKID). Residues 578–581 (NKID) form a G4 region. The interval 614–616 (SAK) is G5.

This sequence belongs to the TRAFAC class translation factor GTPase superfamily. Classic translation factor GTPase family. IF-2 subfamily.

It is found in the cytoplasm. In terms of biological role, one of the essential components for the initiation of protein synthesis. Protects formylmethionyl-tRNA from spontaneous hydrolysis and promotes its binding to the 30S ribosomal subunits. Also involved in the hydrolysis of GTP during the formation of the 70S ribosomal complex. This is Translation initiation factor IF-2 from Nocardia farcinica (strain IFM 10152).